The following is a 276-amino-acid chain: Glutamate racemase (276 aa).

Substrate contacts are provided by residues 12 to 13 (DS) and 44 to 45 (YG). Residue Cys76 is the Proton donor/acceptor of the active site. 77–78 (NT) is a binding site for substrate. The Proton donor/acceptor role is filled by Cys187. 188 to 189 (TH) contributes to the substrate binding site.

It belongs to the aspartate/glutamate racemases family.

The catalysed reaction is L-glutamate = D-glutamate. The protein operates within cell wall biogenesis; peptidoglycan biosynthesis. Its function is as follows. Provides the (R)-glutamate required for cell wall biosynthesis. This is Glutamate racemase from Granulibacter bethesdensis (strain ATCC BAA-1260 / CGDNIH1).